The primary structure comprises 572 residues: Proline--tRNA ligase (572 aa).

This sequence belongs to the class-II aminoacyl-tRNA synthetase family. ProS type 1 subfamily. As to quaternary structure, homodimer.

The protein localises to the cytoplasm. The catalysed reaction is tRNA(Pro) + L-proline + ATP = L-prolyl-tRNA(Pro) + AMP + diphosphate. Catalyzes the attachment of proline to tRNA(Pro) in a two-step reaction: proline is first activated by ATP to form Pro-AMP and then transferred to the acceptor end of tRNA(Pro). As ProRS can inadvertently accommodate and process non-cognate amino acids such as alanine and cysteine, to avoid such errors it has two additional distinct editing activities against alanine. One activity is designated as 'pretransfer' editing and involves the tRNA(Pro)-independent hydrolysis of activated Ala-AMP. The other activity is designated 'posttransfer' editing and involves deacylation of mischarged Ala-tRNA(Pro). The misacylated Cys-tRNA(Pro) is not edited by ProRS. This is Proline--tRNA ligase from Caldicellulosiruptor bescii (strain ATCC BAA-1888 / DSM 6725 / KCTC 15123 / Z-1320) (Anaerocellum thermophilum).